Reading from the N-terminus, the 484-residue chain is MKTTVEKLSPTRVKLAISATPEDLKPHIDHAYGHIAEQVAIPGFRKGKVPPPIIDQRVGREAVLEHAVNDGMDGFYQAAVKETDIRPLGRPEADVKEWPGKDLTGDLLLEIEVDVRPEFDLPAYEGLELTVDSVEVTDDEVATELDSLRSRFGTLITVDRPAKTGDFVQIDLTATIGGNAVDTASGISYELGSGDLIDGIDEALESLTAGESTTFESKLLGGDNEGETAEIAVTVQSVKERELPEADDDFAQIASEFDTIDELRADLKVQVGKSKVFGQVTQARDQIVDKLLEGVEIPVPEKLVEDEVQRHLENENRLEDDVHRAEVKESSEKAFRQQLLLDVIAEKEELKVSQDELTQYLIQGAQQYNMEPNEFVQVLQQNNQIPAMVGEVARNKALAVVLDKAKVVDADGKVVDVTEFTKPVVRDADAVSEEPADADAEAVVADAPAEEAAEAPAAEEAPAEKPKKKAPAKKKASEKAADSE.

The region spanning 165 to 244 is the PPIase FKBP-type domain; sequence GDFVQIDLTA…VQSVKERELP (80 aa). Residues 429-484 are disordered; it reads DAVSEEPADADAEAVVADAPAEEAAEAPAAEEAPAEKPKKKAPAKKKASEKAADSE. The segment covering 430–440 has biased composition (acidic residues); the sequence is AVSEEPADADA. Residues 475-484 show a composition bias toward basic and acidic residues; sequence KASEKAADSE.

It belongs to the FKBP-type PPIase family. Tig subfamily.

It is found in the cytoplasm. It catalyses the reaction [protein]-peptidylproline (omega=180) = [protein]-peptidylproline (omega=0). Its function is as follows. Involved in protein export. Acts as a chaperone by maintaining the newly synthesized protein in an open conformation. Functions as a peptidyl-prolyl cis-trans isomerase. The polypeptide is Trigger factor (Clavibacter michiganensis subsp. michiganensis (strain NCPPB 382)).